Reading from the N-terminus, the 273-residue chain is NAD-dependent protein deacylase (273 aa).

Residues 20-272 form the Deacetylase sirtuin-type domain; the sequence is RERLRQRIFF…PEFVEKLLKG (253 aa). 48 to 67 contributes to the NAD(+) binding site; it reads GAGISAESGIRTFRAADGLW. Residues Y92 and R95 each contribute to the substrate site. 129–132 serves as a coordination point for NAD(+); sequence QNID. H147 serves as the catalytic Proton acceptor. 2 residues coordinate Zn(2+): C155 and C174. NAD(+)-binding positions include 214-216, 240-242, and A258; these read GTS and NLE.

Belongs to the sirtuin family. Class III subfamily. Requires Zn(2+) as cofactor.

The protein localises to the cytoplasm. The catalysed reaction is N(6)-acetyl-L-lysyl-[protein] + NAD(+) + H2O = 2''-O-acetyl-ADP-D-ribose + nicotinamide + L-lysyl-[protein]. It catalyses the reaction N(6)-succinyl-L-lysyl-[protein] + NAD(+) + H2O = 2''-O-succinyl-ADP-D-ribose + nicotinamide + L-lysyl-[protein]. The enzyme catalyses N(6)-(2-hydroxyisobutanoyl)-L-lysyl-[protein] + NAD(+) + H2O = 2''-O-(2-hydroxyisobutanoyl)-ADP-D-ribose + nicotinamide + L-lysyl-[protein]. Functionally, NAD-dependent lysine deacetylase that specifically removes acetyl groups on target proteins. Also acts as a protein-lysine deacylase by mediating protein desuccinylation and de-2-hydroxyisobutyrylation. Modulates the activities of several proteins which are inactive in their acylated form. This is NAD-dependent protein deacylase from Escherichia coli O6:H1 (strain CFT073 / ATCC 700928 / UPEC).